Consider the following 257-residue polypeptide: V-type proton ATPase subunit D (257 aa).

The tract at residues Lys211 to Glu233 is disordered. The segment covering Lys216–Ser226 has biased composition (basic and acidic residues).

This sequence belongs to the V-ATPase D subunit family. As to quaternary structure, V-ATPase is a heteromultimeric enzyme composed of a peripheral catalytic V1 complex (components A to H) attached to an integral membrane V0 proton pore complex (components: a, c, c', c'' and d).

Its function is as follows. Subunit of the peripheral V1 complex of vacuolar ATPase. Vacuolar ATPase is responsible for acidifying a variety of intracellular compartments in eukaryotic cells, thus providing most of the energy required for transport processes in the vacuolar system. This Dictyostelium discoideum (Social amoeba) protein is V-type proton ATPase subunit D (atp6v1d).